The primary structure comprises 245 residues: 1-(5-phosphoribosyl)-5-[(5-phosphoribosylamino)methylideneamino] imidazole-4-carboxamide isomerase (245 aa).

Aspartate 8 acts as the Proton acceptor in catalysis. Aspartate 131 acts as the Proton donor in catalysis.

Belongs to the HisA/HisF family.

The protein localises to the cytoplasm. The enzyme catalyses 1-(5-phospho-beta-D-ribosyl)-5-[(5-phospho-beta-D-ribosylamino)methylideneamino]imidazole-4-carboxamide = 5-[(5-phospho-1-deoxy-D-ribulos-1-ylimino)methylamino]-1-(5-phospho-beta-D-ribosyl)imidazole-4-carboxamide. It participates in amino-acid biosynthesis; L-histidine biosynthesis; L-histidine from 5-phospho-alpha-D-ribose 1-diphosphate: step 4/9. The polypeptide is 1-(5-phosphoribosyl)-5-[(5-phosphoribosylamino)methylideneamino] imidazole-4-carboxamide isomerase (Neisseria meningitidis serogroup C (strain 053442)).